An 83-amino-acid chain; its full sequence is Large ribosomal subunit protein bL27 (83 aa).

Belongs to the bacterial ribosomal protein bL27 family.

The chain is Large ribosomal subunit protein bL27 from Thermotoga neapolitana (strain ATCC 49049 / DSM 4359 / NBRC 107923 / NS-E).